Here is a 520-residue protein sequence, read N- to C-terminus: Probable E3 ubiquitin-protein ligase XBOS33 (520 aa).

ANK repeat units lie at residues glycine 44–valine 73, cysteine 77–arginine 106, serine 111–proline 140, glycine 185–alanine 214, and alanine 228–leucine 258. An RING-type zinc finger spans residues cysteine 327–arginine 377. Polar residues predominate over residues glutamine 467–histidine 479. The interval glutamine 467 to leucine 493 is disordered. Over residues glutamate 484–leucine 493 the composition is skewed to basic and acidic residues.

It catalyses the reaction S-ubiquitinyl-[E2 ubiquitin-conjugating enzyme]-L-cysteine + [acceptor protein]-L-lysine = [E2 ubiquitin-conjugating enzyme]-L-cysteine + N(6)-ubiquitinyl-[acceptor protein]-L-lysine.. The protein operates within protein modification; protein ubiquitination. This is Probable E3 ubiquitin-protein ligase XBOS33 (XBOS33) from Oryza sativa subsp. japonica (Rice).